Consider the following 194-residue polypeptide: ATP-dependent Clp protease proteolytic subunit (194 aa).

Serine 98 acts as the Nucleophile in catalysis. Histidine 123 is a catalytic residue.

It belongs to the peptidase S14 family. In terms of assembly, fourteen ClpP subunits assemble into 2 heptameric rings which stack back to back to give a disk-like structure with a central cavity, resembling the structure of eukaryotic proteasomes.

It localises to the cytoplasm. The catalysed reaction is Hydrolysis of proteins to small peptides in the presence of ATP and magnesium. alpha-casein is the usual test substrate. In the absence of ATP, only oligopeptides shorter than five residues are hydrolyzed (such as succinyl-Leu-Tyr-|-NHMec, and Leu-Tyr-Leu-|-Tyr-Trp, in which cleavage of the -Tyr-|-Leu- and -Tyr-|-Trp bonds also occurs).. In terms of biological role, cleaves peptides in various proteins in a process that requires ATP hydrolysis. Has a chymotrypsin-like activity. Plays a major role in the degradation of misfolded proteins. This Wigglesworthia glossinidia brevipalpis protein is ATP-dependent Clp protease proteolytic subunit.